Reading from the N-terminus, the 452-residue chain is Phosphoglucosamine mutase (452 aa).

Catalysis depends on Ser103, which acts as the Phosphoserine intermediate. Residues Ser103, Asp243, Asp245, and Asp247 each contribute to the Mg(2+) site. The residue at position 103 (Ser103) is a Phosphoserine.

This sequence belongs to the phosphohexose mutase family. Requires Mg(2+) as cofactor. Post-translationally, activated by phosphorylation.

It carries out the reaction alpha-D-glucosamine 1-phosphate = D-glucosamine 6-phosphate. Its function is as follows. Catalyzes the conversion of glucosamine-6-phosphate to glucosamine-1-phosphate. The chain is Phosphoglucosamine mutase from Lactobacillus acidophilus (strain ATCC 700396 / NCK56 / N2 / NCFM).